The following is a 1713-amino-acid chain: Serine/threonine-protein kinase MRCK beta (1713 aa).

One can recognise a Protein kinase domain in the interval 76–342 (FEIIKVIGRG…IEDFKKHAFF (267 aa)). Residues 82 to 90 (IGRGAFGEV) and lysine 105 each bind ATP. Aspartate 200 functions as the Proton acceptor in the catalytic mechanism. Residues serine 221 and serine 233 each carry the phosphoserine; by autocatalysis modification. At threonine 239 the chain carries Phosphothreonine; by autocatalysis. The AGC-kinase C-terminal domain occupies 343-413 (EGLNWENIRN…TTESCFSDRG (71 aa)). Threonine 423 is subject to Phosphothreonine. A coiled-coil region spans residues 434–649 (LENSLQIEAY…ASKERKLREH (216 aa)). Arginine 671 carries the post-translational modification Omega-N-methylarginine. Coiled coils occupy residues 681–815 (QEIS…AHWE) and 878–939 (ELQS…FRAD). Serine 927 bears the Phosphoserine mark. A Phosphotyrosine modification is found at tyrosine 954. Positions 971–994 (ASDQETQASKMDLSPSVSVATSTE) are enriched in polar residues. The disordered stretch occupies residues 971-1022 (ASDQETQASKMDLSPSVSVATSTEQQEDMARPQQRPSPVPLPSTQALAMAGP). Residues 1026–1076 (AHQFSIKSFPSPTQCSHCTSLMVGLIRQGYACEVCAFSCHVSCKDSAPQVC) form a Phorbol-ester/DAG-type zinc finger. In terms of domain architecture, PH spans 1096–1215 (GTAYKGYVKV…WVGILEGLQA (120 aa)). Residues 1241–1515 (IKAVLAAAIV…RPLNSDGSLN (275 aa)) form the CNH domain. Positions 1585–1598 (ISNPTNFNHVAHMG) constitute a CRIB domain. Residues 1616–1713 (TVQEEKQGPT…EGLDQPSCDA (98 aa)) are disordered. Residues 1666–1677 (DFDKEPDSDSTK) are compositionally biased toward basic and acidic residues. Serine 1682, serine 1684, serine 1688, serine 1692, and serine 1695 each carry phosphoserine.

It belongs to the protein kinase superfamily. AGC Ser/Thr protein kinase family. DMPK subfamily. Homodimer and homotetramer via the coiled coil regions. Interacts tightly with GTP-bound but not GDP-bound CDC42. Interacts with TJP1; this interaction requires the presence of catalytically active CDC42. Forms a tripartite complex with MYO18A and LURAP1 with the latter acting as an adapter connecting CDC42BPB and MYO18A. LURAP1 binding results in activation of CDC42BPB by abolition of its negative autoregulation. Interacts with STRIP1, STRN3 and SIKE1. Interacts with CPNE4 (via VWFA domain). Interacts with LURAP1. Interacts (via AGC-kinase C-terminal domain) with FAM89B/LRAP25 (via LRR repeat). Forms a tripartite complex with FAM89B/LRAP25 and LIMK1. Mg(2+) serves as cofactor. Proteolytically cleaved by caspases upon apoptosis induction.

It is found in the cytoplasm. The protein localises to the cell membrane. The protein resides in the cell junction. Its subcellular location is the cell projection. It localises to the lamellipodium. The catalysed reaction is L-seryl-[protein] + ATP = O-phospho-L-seryl-[protein] + ADP + H(+). It carries out the reaction L-threonyl-[protein] + ATP = O-phospho-L-threonyl-[protein] + ADP + H(+). Maintained in an inactive, closed conformation by an interaction between the kinase domain and the negative autoregulatory C-terminal coiled-coil region. Agonist binding to the phorbol ester binding site disrupts this, releasing the kinase domain to allow N-terminus-mediated dimerization and kinase activation by transautophosphorylation. Inhibited by chelerythrine chloride. Its function is as follows. Serine/threonine-protein kinase which is an important downstream effector of CDC42 and plays a role in the regulation of cytoskeleton reorganization and cell migration. Regulates actin cytoskeletal reorganization via phosphorylation of PPP1R12C and MYL9/MLC2. In concert with MYO18A and LURAP1, is involved in modulating lamellar actomyosin retrograde flow that is crucial to cell protrusion and migration. Phosphorylates PPP1R12A. In concert with FAM89B/LRAP25 mediates the targeting of LIMK1 to the lamellipodium resulting in its activation and subsequent phosphorylation of CFL1 which is important for lamellipodial F-actin regulation. The chain is Serine/threonine-protein kinase MRCK beta from Mus musculus (Mouse).